Reading from the N-terminus, the 362-residue chain is Aminomethyltransferase (362 aa).

The protein belongs to the GcvT family. In terms of assembly, the glycine cleavage system is composed of four proteins: P, T, L and H.

The enzyme catalyses N(6)-[(R)-S(8)-aminomethyldihydrolipoyl]-L-lysyl-[protein] + (6S)-5,6,7,8-tetrahydrofolate = N(6)-[(R)-dihydrolipoyl]-L-lysyl-[protein] + (6R)-5,10-methylene-5,6,7,8-tetrahydrofolate + NH4(+). Its function is as follows. The glycine cleavage system catalyzes the degradation of glycine. This Listeria monocytogenes serotype 4b (strain F2365) protein is Aminomethyltransferase.